A 146-amino-acid chain; its full sequence is Cyanate hydratase (146 aa).

Catalysis depends on residues Arg-87, Glu-90, and Ser-113.

Belongs to the cyanase family.

It catalyses the reaction cyanate + hydrogencarbonate + 3 H(+) = NH4(+) + 2 CO2. Its function is as follows. Catalyzes the reaction of cyanate with bicarbonate to produce ammonia and carbon dioxide. The protein is Cyanate hydratase of Synechococcus elongatus (strain ATCC 33912 / PCC 7942 / FACHB-805) (Anacystis nidulans R2).